The primary structure comprises 102 residues: Small ribosomal subunit protein uS10 (102 aa).

Belongs to the universal ribosomal protein uS10 family. In terms of assembly, part of the 30S ribosomal subunit.

Involved in the binding of tRNA to the ribosomes. This chain is Small ribosomal subunit protein uS10, found in Chloroflexus aurantiacus (strain ATCC 29366 / DSM 635 / J-10-fl).